Here is a 408-residue protein sequence, read N- to C-terminus: DNA primase DnaG (408 aa).

Positions 171-250 constitute a Toprim domain; sequence DAIIIVEGRA…AYSPRGKSVE (80 aa). Mg(2+) is bound by residues glutamate 177, aspartate 219, and aspartate 221. The tract at residues 276–323 is disordered; sequence AEENVERLPPSAAPAEVRAPAGAGRTSEGERPPRREWDSKPPSTLGEH. Over residues 284 to 298 the composition is skewed to low complexity; it reads PPSAAPAEVRAPAGA. Basic and acidic residues predominate over residues 302–314; the sequence is SEGERPPRREWDS.

The protein belongs to the archaeal DnaG primase family. In terms of assembly, forms a ternary complex with MCM helicase and DNA. Mg(2+) is required as a cofactor.

The catalysed reaction is ssDNA + n NTP = ssDNA/pppN(pN)n-1 hybrid + (n-1) diphosphate.. RNA polymerase that catalyzes the synthesis of short RNA molecules used as primers for DNA polymerase during DNA replication. This chain is DNA primase DnaG, found in Methanoculleus marisnigri (strain ATCC 35101 / DSM 1498 / JR1).